A 209-amino-acid chain; its full sequence is Ion-translocating oxidoreductase complex subunit G (209 aa).

Residues 9–29 (GITLAIFAALTTGLTAVVNSL) form a helical membrane-spanning segment. Thr-175 bears the FMN phosphoryl threonine mark.

It belongs to the RnfG family. The complex is composed of six subunits: RnfA, RnfB, RnfC, RnfD, RnfE and RnfG. FMN serves as cofactor.

It localises to the cell inner membrane. Part of a membrane-bound complex that couples electron transfer with translocation of ions across the membrane. This is Ion-translocating oxidoreductase complex subunit G from Photorhabdus laumondii subsp. laumondii (strain DSM 15139 / CIP 105565 / TT01) (Photorhabdus luminescens subsp. laumondii).